The sequence spans 831 residues: Serine/threonine-protein kinase ATG1 (831 aa).

In terms of domain architecture, Protein kinase spans 21–321; the sequence is YSVEKEIGKG…FTDFFNNEVV (301 aa). Residues 27 to 35 and lysine 50 contribute to the ATP site; that span reads IGKGSFAVV. The Proton acceptor role is filled by aspartate 168. 2 stretches are compositionally biased toward polar residues: residues 360 to 382 and 405 to 419; these read QQESAHIPPTQTDENTSVQTGVR and NSQNPEQSYQSASQK. Residues 360-419 are disordered; sequence QQESAHIPPTQTDENTSVQTGVRRTSGKERLATNHPPHQQIHPEDNSQNPEQSYQSASQK.

Belongs to the protein kinase superfamily. Ser/Thr protein kinase family. APG1/unc-51/ULK1 subfamily. In terms of assembly, homodimer. Forms a ternary complex with ATG13 and ATG17.

It localises to the cytoplasm. The protein localises to the preautophagosomal structure membrane. It carries out the reaction L-seryl-[protein] + ATP = O-phospho-L-seryl-[protein] + ADP + H(+). The enzyme catalyses L-threonyl-[protein] + ATP = O-phospho-L-threonyl-[protein] + ADP + H(+). Its function is as follows. Serine/threonine protein kinase involved in the cytoplasm to vacuole transport (Cvt) and found to be essential in autophagy, where it is required for the formation of autophagosomes. Involved in the clearance of protein aggregates which cannot be efficiently cleared by the proteasome. Required for selective autophagic degradation of the nucleus (nucleophagy) as well as for mitophagy which contributes to regulate mitochondrial quantity and quality by eliminating the mitochondria to a basal level to fulfill cellular energy requirements and preventing excess ROS production. Also involved in endoplasmic reticulum-specific autophagic process, in selective removal of ER-associated degradation (ERAD) substrates. Plays a key role in ATG9 and ATG23 cycling through the pre-autophagosomal structure and is necessary to promote ATG18 binding to ATG9 through phosphorylation of ATG9. Catalyzes phosphorylation of ATG4, decreasing the interaction between ATG4 and ATG8 and impairing deconjugation of PE-conjugated forms of ATG8. This Kluyveromyces lactis (strain ATCC 8585 / CBS 2359 / DSM 70799 / NBRC 1267 / NRRL Y-1140 / WM37) (Yeast) protein is Serine/threonine-protein kinase ATG1.